The following is a 444-amino-acid chain: Interferon-induced protein 44 (444 aa).

One can recognise a TLDc domain in the interval 1-152 (MAVTTRLTWL…IQDYEVFRCE (152 aa)).

Belongs to the IFI44 family. Hepatocytes.

It is found in the cytoplasm. Functionally, this protein aggregates to form microtubular structures. This chain is Interferon-induced protein 44 (IFI44), found in Pan troglodytes (Chimpanzee).